Consider the following 241-residue polypeptide: DNA repair protein RecO (241 aa).

The protein belongs to the RecO family.

In terms of biological role, involved in DNA repair and RecF pathway recombination. The sequence is that of DNA repair protein RecO from Yersinia enterocolitica serotype O:8 / biotype 1B (strain NCTC 13174 / 8081).